The following is a 354-amino-acid chain: tRNA pseudouridine synthase D (354 aa).

Aspartate 86 acts as the Nucleophile in catalysis. In terms of domain architecture, TRUD spans 162-309 (GVPNYFGPQR…LEVGRRALRL (148 aa)).

This sequence belongs to the pseudouridine synthase TruD family.

It carries out the reaction uridine(13) in tRNA = pseudouridine(13) in tRNA. Functionally, responsible for synthesis of pseudouridine from uracil-13 in transfer RNAs. The protein is tRNA pseudouridine synthase D of Methylococcus capsulatus (strain ATCC 33009 / NCIMB 11132 / Bath).